A 130-amino-acid chain; its full sequence is MISLASWQLLLLLCVASFGEPLAKMAPVVNPEPTGQQSGPQELVNAWQKGPRYAESKPGAAGLRARRTSPCPPVENPTGHQRPPCATRSRLIPAPRGSVLVQREKDMSAYNWNSFGLRYGRRQVARAARG.

An N-terminal signal peptide occupies residues 1 to 19 (MISLASWQLLLLLCVASFG). The disordered stretch occupies residues 52 to 91 (RYAESKPGAAGLRARRTSPCPPVENPTGHQRPPCATRSRL). Cysteines 71 and 85 form a disulfide. At Tyr-110 the chain carries Phosphotyrosine. Residues 110–119 (YNWNSFGLRY) are essential for receptor binding and receptor activation. At Tyr-119 the chain carries Tyrosine amide.

Belongs to the KISS1 family. As to expression, highest levels in the cecum and colon. Moderate levels present in the liver, spleen, kidney, ovary, uterus and small intestine. Low levels in the stomach, pancreas and placenta. Expressed only moderately in the placenta. Persistent expression is detected in hypothalamus throughout postnatal development, with maximum expression levels at puberty in both male and female. Hypothalamic expression is sensitive to neonatal imprinting by estrogen. Expression is higher in the hypothalamus than in the brainstem and spinal cord. In the brain, metastin-like immunoreactivity is found mainly in three groups of cells: dorsomedial hypothalamic nucleus, nucleus of the solitary tract, and caudal ventrolateral medulla.

The protein localises to the secreted. In terms of biological role, metastasis suppressor protein. May regulate events downstream of cell-matrix adhesion, perhaps involving cytoskeletal reorganization. Generates a C-terminally amidated peptide, metastin which functions as the endogenous ligand of the G-protein coupled receptor GPR54. The receptor is also essential for normal gonadotropin-released hormone physiology and for puberty. The hypothalamic KiSS1/GPR54 system is a pivotal factor in central regulation of the gonadotropic axis at puberty and in adulthood. Intracerebroventricular administration induces an increase in serum LH and FSH levels in prepubertal male and female as well as in adult animals. This chain is Metastasis-suppressor KiSS-1 (Kiss1), found in Rattus norvegicus (Rat).